Consider the following 156-residue polypeptide: Putative NrdI-like protein (156 aa).

It belongs to the NrdI family.

The chain is Putative NrdI-like protein from Streptococcus pneumoniae serotype 4 (strain ATCC BAA-334 / TIGR4).